The primary structure comprises 769 residues: Integrin beta-2 (769 aa).

Positions Met1 to Ser22 are cleaved as a signal peptide. The residue at position 23 (Gln23) is a Pyrrolidone carboxylic acid. At Gln23–Asn700 the chain is on the extracellular side. Positions Glu24–Pro74 constitute a PSI domain. Cystine bridges form between Cys25/Cys43, Cys33/Cys447, Cys36/Cys62, Cys46/Cys73, Cys191/Cys198, Cys246/Cys286, Cys386/Cys400, Cys420/Cys445, Cys449/Cys467, Cys459/Cys470, Cys472/Cys481, Cys483/Cys514, Cys497/Cys512, Cys506/Cys517, Cys519/Cys534, Cys536/Cys559, Cys541/Cys557, Cys549/Cys562, Cys564/Cys573, Cys575/Cys598, Cys582/Cys596, Cys590/Cys601, Cys603/Cys612, Cys615/Cys618, Cys622/Cys662, Cys628/Cys647, Cys631/Cys643, and Cys670/Cys695. Asn50 and Asn116 each carry an N-linked (GlcNAc...) asparagine glycan. The VWFA domain maps to Gly124–Leu363. The Mg(2+) site is built by Ser136 and Ser138. 4 residues coordinate Ca(2+): Ser138, Asp141, Asp142, and Asp173. Ca(2+) contacts are provided by Asn229, Asp231, Pro233, and Glu234. Residue Glu234 coordinates Mg(2+). Asn254 carries N-linked (GlcNAc...) asparagine glycosylation. Positions 264 and 347 each coordinate Ca(2+). The Cell attachment site motif lies at Arg397–Asp399. I-EGF domains are found at residues Cys449–Glu482, Cys483–Glu535, Cys536–Gln574, and Cys575–Ser613. An N-linked (GlcNAc...) asparagine glycan is attached at Asn501. The N-linked (GlcNAc...) asparagine glycan is linked to Asn642. A helical transmembrane segment spans residues Ile701–Trp723. The Cytoplasmic portion of the chain corresponds to Lys724–Ser769. Ser745 and Ser756 each carry phosphoserine. Phosphothreonine occurs at positions 758 and 760.

The protein belongs to the integrin beta chain family. In terms of assembly, heterodimer of an alpha and a beta subunit. The ITGB2 beta subunit associates with the ITGAL, ITGAM, ITGAX or ITGAD alpha subunits. Found in a complex with CD177 and ITGAM/CD11b. Interacts with FGR. Interacts with COPS5 and RANBP9. Interacts with FLNA (via filamin repeats 4, 9, 12, 17, 19, 21, and 23). Interacts with THBD. Both Ser-745 and Ser-756 become phosphorylated when T-cells are exposed to phorbol esters. Phosphorylation on Thr-758 (but not on Ser-756) allows interaction with 14-3-3 proteins.

It localises to the cell membrane. Its subcellular location is the membrane raft. Its function is as follows. Integrin ITGAL/ITGB2 is a receptor for ICAM1, ICAM2, ICAM3 and ICAM4. Integrin ITGAL/ITGB2 is also a receptor for the secreted form of ubiquitin-like protein ISG15; the interaction is mediated by ITGAL. Integrins ITGAM/ITGB2 and ITGAX/ITGB2 are receptors for the iC3b fragment of the third complement component and for fibrinogen. Integrin ITGAX/ITGB2 recognizes the sequence G-P-R in fibrinogen alpha-chain. Integrin ITGAM/ITGB2 recognizes P1 and P2 peptides of fibrinogen gamma chain. Integrin ITGAM/ITGB2 is also a receptor for factor X. Integrin ITGAD/ITGB2 is a receptor for ICAM3 and VCAM1. Contributes to natural killer cell cytotoxicity. Involved in leukocyte adhesion and transmigration of leukocytes including T-cells and neutrophils. Triggers neutrophil transmigration during lung injury through PTK2B/PYK2-mediated activation. Integrin ITGAL/ITGB2 in association with ICAM3, contributes to apoptotic neutrophil phagocytosis by macrophages. This chain is Integrin beta-2 (ITGB2), found in Bos taurus (Bovine).